Here is a 328-residue protein sequence, read N- to C-terminus: Ferredoxin--NADP reductase 1 (328 aa).

The FAD site is built by D28, Q36, Y41, A81, I116, D277, and S320.

Belongs to the ferredoxin--NADP reductase type 2 family. As to quaternary structure, homodimer. It depends on FAD as a cofactor.

It catalyses the reaction 2 reduced [2Fe-2S]-[ferredoxin] + NADP(+) + H(+) = 2 oxidized [2Fe-2S]-[ferredoxin] + NADPH. The protein is Ferredoxin--NADP reductase 1 of Sulfolobus acidocaldarius (strain ATCC 33909 / DSM 639 / JCM 8929 / NBRC 15157 / NCIMB 11770).